The following is a 235-amino-acid chain: Cytochrome c-554 (235 aa).

The N-terminal stretch at 1–24 (MKIMIACGLVAAALFTLTSGQSLA) is a signal peptide. Residues cysteine 35, cysteine 38, histidine 39, histidine 51, cysteine 84, cysteine 87, histidine 88, cysteine 112, cysteine 115, histidine 116, histidine 126, cysteine 158, cysteine 161, histidine 162, and histidine 203 each contribute to the heme site. The interval 121-144 (NFRGDHRKSGQAFEKSGKKTPRKD) is disordered.

Post-translationally, binds 4 heme groups per subunit.

The protein resides in the periplasm. In terms of biological role, involved in ammonia oxidation; accepts electrons directly from hydroxylamine oxidoreductase (HAO). The polypeptide is Cytochrome c-554 (cycA1) (Nitrosomonas europaea (strain ATCC 19718 / CIP 103999 / KCTC 2705 / NBRC 14298)).